The primary structure comprises 200 residues: MQVILLERVAKLGQMGDVVDVKSGYARNFLLPQSKALVASDANIAQFEAQKAQLEARNLETKQEAEALAVKLDGQQFVVIRSASDAGALYGSVTPRDAAEAATEAGFSVDKKQIALIAPIKDLGLHTVAVRLHPEVEVSINLNIARSPEEAELQASGKSIQELAAEEEAAAEFEIAELFDDLGGAASDDDDQAPASDETA.

Belongs to the bacterial ribosomal protein bL9 family.

Binds to the 23S rRNA. The sequence is that of Large ribosomal subunit protein bL9 from Ruegeria pomeroyi (strain ATCC 700808 / DSM 15171 / DSS-3) (Silicibacter pomeroyi).